Consider the following 242-residue polypeptide: DNA repair protein RecO (242 aa).

This sequence belongs to the RecO family. In terms of assembly, monomer.

Its function is as follows. Involved in DNA repair and RecF pathway recombination. This chain is DNA repair protein RecO, found in Shigella flexneri serotype 5b (strain 8401).